Consider the following 210-residue polypeptide: Large ribosomal subunit protein uL3 (210 aa).

The disordered stretch occupies residues 121 to 150; that stretch reads GGIKRHGFHRGPMAHGSKYHRRPGSLGAKG.

This sequence belongs to the universal ribosomal protein uL3 family. In terms of assembly, part of the 50S ribosomal subunit. Forms a cluster with proteins L14 and L19.

One of the primary rRNA binding proteins, it binds directly near the 3'-end of the 23S rRNA, where it nucleates assembly of the 50S subunit. The protein is Large ribosomal subunit protein uL3 of Pelotomaculum thermopropionicum (strain DSM 13744 / JCM 10971 / SI).